The sequence spans 356 residues: Stomatin-like protein 2, mitochondrial (356 aa).

The N-terminal 28 residues, 1-28, are a transit peptide targeting the mitochondrion; that stretch reads MLARAARGTGALLLRGSLLASGRAPRRA. S17 carries the phosphoserine; by PKC/PRKCZ modification. Residue Y124 is modified to Phosphotyrosine. K145 carries the N6-acetyllysine; alternate modification. K145 carries the post-translational modification N6-succinyllysine; alternate. Residues 215–252 adopt a coiled-coil conformation; the sequence is INVAEGKKQAQILASEAEKAEQINQAAGEASAVLAKAK. The residue at position 233 (K233) is an N6-acetyllysine. The interval 321-356 is disordered; sequence KAPVPGTPDSLSSGSSRDVQGTDASLDEELDRVKMS. T327 carries the post-translational modification Phosphothreonine. Over residues 329–343 the composition is skewed to polar residues; that stretch reads DSLSSGSSRDVQGTD. Residue S330 is modified to Phosphoserine.

This sequence belongs to the band 7/mec-2 family. Forms homooligomers. Interacts with MFN2; may form heterooligomers. Interacts with CACNA2D2. Interacts with PHB1 and PHB2; recruits them to cardiolipin-enriched mitochondrial membranes and stabilizes them. Post-translationally, hyperphosphorylated at Ser-17 in some patients with monoclonal gammopathy of undetermined significance (MGUS), multiple myeloma (MM) and Waldenstrom macroglobulinemia due to impaired dephosphorylation by PP2A. Ubiquitously expressed at low levels. Expressed in lymphoid tissues (at protein level).

The protein resides in the cell membrane. Its subcellular location is the mitochondrion. It is found in the mitochondrion inner membrane. It localises to the mitochondrion intermembrane space. The protein localises to the membrane raft. The protein resides in the cytoplasm. Its subcellular location is the cytoskeleton. Functionally, mitochondrial protein that probably regulates the biogenesis and the activity of mitochondria. Stimulates cardiolipin biosynthesis, binds cardiolipin-enriched membranes where it recruits and stabilizes some proteins including prohibitin and may therefore act in the organization of functional microdomains in mitochondrial membranes. Through regulation of the mitochondrial function may play a role into several biological processes including cell migration, cell proliferation, T-cell activation, calcium homeostasis and cellular response to stress. May play a role in calcium homeostasis through negative regulation of calcium efflux from mitochondria. Required for mitochondrial hyperfusion a pro-survival cellular response to stress which results in increased ATP production by mitochondria. May also regulate the organization of functional domains at the plasma membrane and play a role in T-cell activation through association with the T-cell receptor signaling complex and its regulation. The chain is Stomatin-like protein 2, mitochondrial (STOML2) from Homo sapiens (Human).